The primary structure comprises 141 residues: HTH-type transcriptional regulator MntR (141 aa).

In terms of domain architecture, HTH dtxR-type spans 1-63 (MPTPSMEDYI…YEKYRGLVLT (63 aa)). Mn(2+) contacts are provided by Asp8, Glu11, His77, Glu99, Glu102, and His103.

The protein belongs to the DtxR/MntR family. In terms of assembly, homodimer.

It localises to the cytoplasm. With respect to regulation, DNA binding is strongly activated by Mn(2+). In terms of biological role, central regulator of manganese homeostasis. The protein is HTH-type transcriptional regulator MntR of Geobacillus thermodenitrificans (strain NG80-2).